Reading from the N-terminus, the 346-residue chain is Elongation factor Ts (346 aa).

Residues 80–83 are involved in Mg(2+) ion dislocation from EF-Tu; it reads TDFV.

It belongs to the EF-Ts family.

The protein resides in the cytoplasm. Functionally, associates with the EF-Tu.GDP complex and induces the exchange of GDP to GTP. It remains bound to the aminoacyl-tRNA.EF-Tu.GTP complex up to the GTP hydrolysis stage on the ribosome. The chain is Elongation factor Ts from Streptococcus thermophilus (strain CNRZ 1066).